The following is a 285-amino-acid chain: tRNA pseudouridine synthase A (285 aa).

The active-site Nucleophile is the Asp69. Tyr127 serves as a coordination point for substrate.

The protein belongs to the tRNA pseudouridine synthase TruA family. Homodimer.

The enzyme catalyses uridine(38/39/40) in tRNA = pseudouridine(38/39/40) in tRNA. Formation of pseudouridine at positions 38, 39 and 40 in the anticodon stem and loop of transfer RNAs. The polypeptide is tRNA pseudouridine synthase A (Pseudomonas aeruginosa (strain ATCC 15692 / DSM 22644 / CIP 104116 / JCM 14847 / LMG 12228 / 1C / PRS 101 / PAO1)).